Reading from the N-terminus, the 219-residue chain is MHRKGAIGIGTLIVFIAMVLVAAVAAGVIIGTAGYLQQKAQATGMQTTQEVSSGIKIINIYGYVNSSVPSNGTITKMAIFVSPNAGSGGISLSNVKIVLSDGKKLVVYNYSKGLLYDKQISDLFNDSIVTIWNNITDTTFGIAVINDSGNKMDKDYPNLEWGDTVALLLRTTVFETEDNRRGIGPGTRIVGKVIPEVGAAGVIDFTTPSTYNYRVMVLQ.

Residues 1–5 (MHRKG) constitute a propeptide that is removed on maturation.

Belongs to the archaeal flagellin family.

It is found in the archaeal flagellum. Its function is as follows. Flagellin is the subunit protein which polymerizes to form the filaments of archaeal flagella. The polypeptide is Flagellin B4 (flaB4) (Pyrococcus abyssi (strain GE5 / Orsay)).